The following is a 455-amino-acid chain: Protein png1 (455 aa).

Positions 1 to 110 are disordered; the sequence is MTDGRQQHTR…LPVFPSPPRD (110 aa). The segment covering 38-53 has biased composition (low complexity); that stretch reads SLQEQSRSRSRTQSPS. A compositionally biased stretch (pro residues) spans 59–73; it reads HTPPHPSRAPPPPPT. Residues 74 to 98 show a composition bias toward low complexity; that stretch reads GAHYPSSQSPSQQHQQHQLPASSSL. Residues C199, C202, C231, and C236 each coordinate Zn(2+). Positions 408–455 are disordered; sequence NLIPREQTSGRPGEQKTPASMQDTPVDWVAAQQMGPGQSGPDRSQDGR.

The protein belongs to the transglutaminase-like superfamily. PNGase family.

In Aspergillus fumigatus (strain ATCC MYA-4609 / CBS 101355 / FGSC A1100 / Af293) (Neosartorya fumigata), this protein is Protein png1 (png1).